A 413-amino-acid chain; its full sequence is MAYVSMGEAHRRITEYLNRFCDAVSYQDSSTLCRLLSFSSNSPPLLSLADALNVFQDSSSLIRQSDRFSEYGEILAHVFRSLQSYRVGNLVEAYLAFDKFANAFVQEFRNWESAWALEALYVVCYEIRVLAEKADKDLTSNGKSPEKLKAAGSLLMKVFGVLAGKGPKRVGALYVTCQLFKTYFKLGTVNLCRSVIRSIETARIFDFEEFPRRDKVTYMYYTGRLEVFNENFPAADTKLSYALQNCNPKRERNIRMILKYLVPVKLSLGIIPKDELLRNYNLHEYTKIVQALRKGDLRLLRHALQEHEDRFLRSGVYLVLEKLELQVYQRLMKKIYINQKLSDPARAHQLKLEGIAKALRWLDMDMDLDEVECIMTILIYKNLVKGYLAHKSKVVVLSKQDPFPKLNGKPVSS.

In terms of domain architecture, PCI spans 216–402 (VTYMYYTGRL…KVVVLSKQDP (187 aa)).

As to quaternary structure, interacts with EIN2 (via C-terminus). May also interact weakly with CSN8. Interacts with DSS1(V), AMPD, SAC3A, SAC3B and At5g61290 (AC Q9FLK4). Interacts with UCH1 and UCH2. Interacts with NUP1, anchoring the TREX-2 complex on the nuclear pore complex. As to expression, expressed at low levels in roots, leaves, stems and shoots. Detected in seedlings, roots, leaves and anthers.

The protein localises to the nucleus. Involved in the regulation of ethylene response. Probable TREX-2 component required for nuclear RNA export. The TREX-2 complex (transcription and export complex 2) functions in docking export-competent ribonucleoprotein particles (mRNPs) to the nuclear entrance of the nuclear pore complex (nuclear basket). TREX-2 participates in mRNA export and accurate chromatin positioning in the nucleus by tethering genes to the nuclear periphery. This is Enhanced ethylene response protein 5 from Arabidopsis thaliana (Mouse-ear cress).